The chain runs to 160 residues: MGVTKKPDLNDPVLRAKLAKGMGHNYYGEPAWPNDLLYIFPVVILGTIACNVGLAVLEPSMIGEPADPFATPLEILPEWYFFPVFQILRTVPNKLLGVLLMVSVPAGLLTVPFLENVNKFQNPFRRPVATTVFLIGTAAALWLGIGATLPIDKSLTLGLF.

The next 3 membrane-spanning stretches (helical) occupy residues 36-56 (LLYI…GLAV), 95-115 (LLGV…PFLE), and 131-151 (TVFL…TLPI).

This sequence belongs to the cytochrome b family. PetD subfamily. In terms of assembly, the 4 large subunits of the cytochrome b6-f complex are cytochrome b6, subunit IV (17 kDa polypeptide, petD), cytochrome f and the Rieske protein, while the 4 small subunits are petG, petL, petM and petN. The complex functions as a dimer.

It localises to the plastid. The protein localises to the chloroplast thylakoid membrane. In terms of biological role, component of the cytochrome b6-f complex, which mediates electron transfer between photosystem II (PSII) and photosystem I (PSI), cyclic electron flow around PSI, and state transitions. The sequence is that of Cytochrome b6-f complex subunit 4 from Arabidopsis thaliana (Mouse-ear cress).